A 484-amino-acid polypeptide reads, in one-letter code: Trigger factor (484 aa).

A PPIase FKBP-type domain is found at 162-243 (GDFISIDLSA…VKSVKERELP (82 aa)). The segment at 427–484 (DGNTIDTSEFFGKPPENDVTDLLDDDADGDAGVDADGDTENSAEPADADSADAAQGAG) is disordered. Residues 444–476 (DVTDLLDDDADGDAGVDADGDTENSAEPADADS) are compositionally biased toward acidic residues.

It belongs to the FKBP-type PPIase family. Tig subfamily.

Its subcellular location is the cytoplasm. It carries out the reaction [protein]-peptidylproline (omega=180) = [protein]-peptidylproline (omega=0). Involved in protein export. Acts as a chaperone by maintaining the newly synthesized protein in an open conformation. Functions as a peptidyl-prolyl cis-trans isomerase. The sequence is that of Trigger factor from Mycobacterium marinum (strain ATCC BAA-535 / M).